The chain runs to 150 residues: Transcriptional regulator MraZ (150 aa).

SpoVT-AbrB domains follow at residues 7-58 and 87-130; these read KEQH…EPEI and LDSV…SPEK.

It belongs to the MraZ family. Forms oligomers.

It localises to the cytoplasm. The protein resides in the nucleoid. The sequence is that of Transcriptional regulator MraZ from Chlorobium phaeobacteroides (strain BS1).